The chain runs to 136 residues: Small ribosomal subunit protein uS9 (136 aa).

The disordered stretch occupies residues Gly-95 to Arg-136. The span at Asp-99–Ser-116 shows a compositional bias: basic and acidic residues. Positions Lys-117–Arg-136 are enriched in basic residues.

Belongs to the universal ribosomal protein uS9 family.

The protein is Small ribosomal subunit protein uS9 of Prochlorococcus marinus subsp. pastoris (strain CCMP1986 / NIES-2087 / MED4).